Consider the following 786-residue polypeptide: DNA repair and recombination protein RAD54-like (786 aa).

The segment at 2–9 (RRSLAPSQ) is required for chromatin remodeling, strand pairing activities and coupling of ATPase activity. At Thr22 the chain carries Phosphothreonine. The 176-residue stretch at 165–340 (EGKRGSFNGC…FSLVNFVNPE (176 aa)) folds into the Helicase ATP-binding domain. 178–185 (DEMGLGKT) contacts ATP. The DEGH box signature appears at 291–294 (DEGH). Residues 497–654 (LLDFMLAAIR…NNESVEKHFT (158 aa)) form the Helicase C-terminal domain. The tract at residues 738–786 (EAKPAATTTDEDEELSDSKRKAKKTLASDDDDDEDFVLNCSSGEEFSGF) is disordered. Over residues 776 to 786 (NCSSGEEFSGF) the composition is skewed to polar residues.

It belongs to the SNF2/RAD54 helicase family. As to quaternary structure, interacts (via N-terminus) with spn-A/Rad51.

It is found in the nucleus. Functionally, involved in mitotic DNA repair and meiotic recombination. Functions in the recombinational DNA repair pathway. Essential for interhomolog gene conversion (GC), but may have a less important role in intersister GC than spn-A/Rad51. In the presence of DNA, spn-A/Rad51 enhances the ATPase activity of okr/Rad54. The chain is DNA repair and recombination protein RAD54-like from Drosophila grimshawi (Hawaiian fruit fly).